A 295-amino-acid polypeptide reads, in one-letter code: ATP synthase gamma chain (295 aa).

Belongs to the ATPase gamma chain family. In terms of assembly, F-type ATPases have 2 components, CF(1) - the catalytic core - and CF(0) - the membrane proton channel. CF(1) has five subunits: alpha(3), beta(3), gamma(1), delta(1), epsilon(1). CF(0) has three main subunits: a, b and c.

Its subcellular location is the cell inner membrane. Its function is as follows. Produces ATP from ADP in the presence of a proton gradient across the membrane. The gamma chain is believed to be important in regulating ATPase activity and the flow of protons through the CF(0) complex. This chain is ATP synthase gamma chain, found in Sulfurovum sp. (strain NBC37-1).